The primary structure comprises 357 residues: Tetraacyldisaccharide 4'-kinase (357 aa).

67 to 74 (SVGGTGKT) provides a ligand contact to ATP.

This sequence belongs to the LpxK family.

The catalysed reaction is a lipid A disaccharide + ATP = a lipid IVA + ADP + H(+). Its pathway is glycolipid biosynthesis; lipid IV(A) biosynthesis; lipid IV(A) from (3R)-3-hydroxytetradecanoyl-[acyl-carrier-protein] and UDP-N-acetyl-alpha-D-glucosamine: step 6/6. Its function is as follows. Transfers the gamma-phosphate of ATP to the 4'-position of a tetraacyldisaccharide 1-phosphate intermediate (termed DS-1-P) to form tetraacyldisaccharide 1,4'-bis-phosphate (lipid IVA). This Syntrophotalea carbinolica (strain DSM 2380 / NBRC 103641 / GraBd1) (Pelobacter carbinolicus) protein is Tetraacyldisaccharide 4'-kinase.